A 271-amino-acid polypeptide reads, in one-letter code: MAEYSGPAKPTLALNPREDSQFEKDLTQIQRRAKKKKEEKLNSGVVYLGHLPSTLSESHIYDYCAQFGDIRRFRLSRSKRTGNSRGFAFVEFESEDVAKIVAETMDNYLFGERLLSCKFMPREKVHKDLFNQCNVPFHPPSFPAVKRYNQKRGHLQMLKMEYRFKKKEKLLRKKLAKKGIDYSFPSLVLPKPKKEISSIANTHGDSEANQDPTPVCTPTFLERRKSQLMEINDDDEIILKLPVSPVKEDTQKTPAPESSGKKRLRKRKSKQ.

Positions 1-20 (MAEYSGPAKPTLALNPREDS) are disordered. At A2 the chain carries N-acetylalanine. K37 is covalently cross-linked (Glycyl lysine isopeptide (Lys-Gly) (interchain with G-Cter in SUMO2)). Residues 44–122 (GVVYLGHLPS…RLLSCKFMPR (79 aa)) enclose the RRM domain. Position 113 is an omega-N-methylarginine (R113). Glycyl lysine isopeptide (Lys-Gly) (interchain with G-Cter in SUMO2) cross-links involve residues K178 and K191. Phosphothreonine is present on residues T213 and T217. 2 positions are modified to omega-N-methylated arginine: R223 and R224. The residue at position 226 (S226) is a Phosphoserine. The disordered stretch occupies residues 242-271 (PVSPVKEDTQKTPAPESSGKKRLRKRKSKQ). K247 participates in a covalent cross-link: Glycyl lysine isopeptide (Lys-Gly) (interchain with G-Cter in SUMO1); alternate. K247 is covalently cross-linked (Glycyl lysine isopeptide (Lys-Gly) (interchain with G-Cter in SUMO2); alternate). Residues 261-271 (KKRLRKRKSKQ) show a composition bias toward basic residues.

As to quaternary structure, binds to the FHA domain of MKI67; this interaction is enhanced in mitosis. In terms of processing, phosphorylated.

The protein resides in the nucleus. It is found in the nucleolus. The protein localises to the chromosome. The chain is MKI67 FHA domain-interacting nucleolar phosphoprotein (Nifk) from Rattus norvegicus (Rat).